The chain runs to 314 residues: Acetaldehyde dehydrogenase (314 aa).

Residue 15-18 (SGNI) participates in NAD(+) binding. Cysteine 133 (acyl-thioester intermediate) is an active-site residue. NAD(+) contacts are provided by residues 164 to 172 (SAGPGTRAN) and asparagine 292.

This sequence belongs to the acetaldehyde dehydrogenase family.

The catalysed reaction is acetaldehyde + NAD(+) + CoA = acetyl-CoA + NADH + H(+). The sequence is that of Acetaldehyde dehydrogenase from Paraburkholderia phytofirmans (strain DSM 17436 / LMG 22146 / PsJN) (Burkholderia phytofirmans).